Reading from the N-terminus, the 115-residue chain is NAD(P)H-quinone oxidoreductase subunit M (115 aa).

The protein belongs to the complex I NdhM subunit family. In terms of assembly, NDH-1 can be composed of about 15 different subunits; different subcomplexes with different compositions have been identified which probably have different functions.

It is found in the cellular thylakoid membrane. The enzyme catalyses a plastoquinone + NADH + (n+1) H(+)(in) = a plastoquinol + NAD(+) + n H(+)(out). The catalysed reaction is a plastoquinone + NADPH + (n+1) H(+)(in) = a plastoquinol + NADP(+) + n H(+)(out). Its function is as follows. NDH-1 shuttles electrons from an unknown electron donor, via FMN and iron-sulfur (Fe-S) centers, to quinones in the respiratory and/or the photosynthetic chain. The immediate electron acceptor for the enzyme in this species is believed to be plastoquinone. Couples the redox reaction to proton translocation, and thus conserves the redox energy in a proton gradient. Cyanobacterial NDH-1 also plays a role in inorganic carbon-concentration. The protein is NAD(P)H-quinone oxidoreductase subunit M of Prochlorococcus marinus (strain MIT 9515).